The chain runs to 446 residues: Histidine--tRNA ligase (446 aa).

It belongs to the class-II aminoacyl-tRNA synthetase family. As to quaternary structure, homodimer.

Its subcellular location is the cytoplasm. The enzyme catalyses tRNA(His) + L-histidine + ATP = L-histidyl-tRNA(His) + AMP + diphosphate + H(+). The protein is Histidine--tRNA ligase of Burkholderia pseudomallei (strain K96243).